The primary structure comprises 361 residues: 3,6-anhydro-alpha-L-galactonate cycloisomerase (361 aa).

Lys-166 functions as the Proton acceptor in the catalytic mechanism. Residues Asp-195, Glu-221, and Glu-247 each contribute to the Mg(2+) site. Catalysis depends on His-297, which acts as the Proton donor/acceptor.

It belongs to the mandelate racemase/muconate lactonizing enzyme family. Requires Mg(2+) as cofactor.

It carries out the reaction 3,6-anhydro-L-galactonate = 2-dehydro-3-deoxy-L-galactonate. Functionally, involved in the degradation of 3,6-anhydro-L-galactose, which is the major monomeric sugar of red macroalgae. Catalyzes the isomerization of 3,6-anhydrogalactonate (AHGA) to 2-keto-3-deoxy-galactonate (KDGal). The protein is 3,6-anhydro-alpha-L-galactonate cycloisomerase of Streptomyces coelicolor (strain ATCC BAA-471 / A3(2) / M145).